The sequence spans 262 residues: Protein Pcal_0062 (262 aa).

It belongs to the CinA family.

The polypeptide is Protein Pcal_0062 (Pyrobaculum calidifontis (strain DSM 21063 / JCM 11548 / VA1)).